Reading from the N-terminus, the 95-residue chain is Putative septation protein SpoVG (95 aa).

It belongs to the SpoVG family.

Could be involved in septation. The chain is Putative septation protein SpoVG from Brevibacillus brevis (strain 47 / JCM 6285 / NBRC 100599).